The primary structure comprises 547 residues: Dihydroxy-acid dehydratase (547 aa).

Residue aspartate 78 coordinates Mg(2+). Cysteine 119 contacts [2Fe-2S] cluster. 2 residues coordinate Mg(2+): aspartate 120 and lysine 121. Residue lysine 121 is modified to N6-carboxylysine. Residue cysteine 191 participates in [2Fe-2S] cluster binding. Position 439 (glutamate 439) interacts with Mg(2+). The active-site Proton acceptor is serine 464.

The protein belongs to the IlvD/Edd family. In terms of assembly, homodimer. [2Fe-2S] cluster serves as cofactor. Requires Mg(2+) as cofactor.

It catalyses the reaction (2R)-2,3-dihydroxy-3-methylbutanoate = 3-methyl-2-oxobutanoate + H2O. It carries out the reaction (2R,3R)-2,3-dihydroxy-3-methylpentanoate = (S)-3-methyl-2-oxopentanoate + H2O. Its pathway is amino-acid biosynthesis; L-isoleucine biosynthesis; L-isoleucine from 2-oxobutanoate: step 3/4. It functions in the pathway amino-acid biosynthesis; L-valine biosynthesis; L-valine from pyruvate: step 3/4. Functions in the biosynthesis of branched-chain amino acids. Catalyzes the dehydration of (2R,3R)-2,3-dihydroxy-3-methylpentanoate (2,3-dihydroxy-3-methylvalerate) into 2-oxo-3-methylpentanoate (2-oxo-3-methylvalerate) and of (2R)-2,3-dihydroxy-3-methylbutanoate (2,3-dihydroxyisovalerate) into 2-oxo-3-methylbutanoate (2-oxoisovalerate), the penultimate precursor to L-isoleucine and L-valine, respectively. In Methanospirillum hungatei JF-1 (strain ATCC 27890 / DSM 864 / NBRC 100397 / JF-1), this protein is Dihydroxy-acid dehydratase.